Reading from the N-terminus, the 210-residue chain is CLAVATA3/ESR (CLE)-related protein 4D (210 aa).

An N-terminal signal peptide occupies residues 1–21; sequence MAKNAMLCLLILSVVLALAFA. The tract at residues 21–83 is required for secretion from the host cytoplasm to the host apoplasm; sequence ATNKKDDEEP…SNQLPNNNWM (63 aa). N-linked (GlcNAc...) asparagine glycosylation is found at Asn32 and Asn59. Residues 115–210 form a disordered region; sequence RRKTGTHSQR…APAGPDPIHH (96 aa). 4 stretches are compositionally biased toward basic and acidic residues: residues 125-137, 144-158, 165-179, and 186-200; these read HHEETTLEQEKRG, PIHHQDTTFEQEKRG, PIHHQDTTLEQEKRV, and PIHHQDTKFEQEKRG. One copy of the A-1 repeat lies at 127-135; sequence EETTLEQEK. The interval 129–198 is 4 X approximate repeat A; that stretch reads TTLEQEKRGA…HQDTKFEQEK (70 aa). The CLE-1 repeat unit spans residues 136-147; sequence RGAPAGPDPIHH. The 4 X approximate repeat CLE stretch occupies residues 136-210; it reads RGAPAGPDPI…APAGPDPIHH (75 aa). The A-2 repeat unit spans residues 148 to 156; it reads QDTTFEQEK. The CLE-2 repeat unit spans residues 157 to 168; sequence RGAPAGPDPIHH. The stretch at 169–177 is one A-3 repeat; the sequence is QDTTLEQEK. The CLE-3 repeat unit spans residues 178-189; the sequence is RVAGAGPDPIHH. An A-4 repeat occupies 190–198; that stretch reads QDTKFEQEK. The stretch at 199–210 is one CLE-4 repeat; sequence RGAPAGPDPIHH.

The protein belongs to the CLV3/ESR signal peptide family. Highly expressed exclusively within the dorsal esophageal gland cell during syncytium formation in host plants.

It is found in the secreted. The protein resides in the host cytoplasm. It localises to the host extracellular space. The protein localises to the extracellular space. Its subcellular location is the apoplast. Functionally, mimics host plant CLE extracellular signal peptides that regulate cell fate. May play a role in the differentiation or division of feeding cells (syncytia) induced in plant roots during infection. This is CLAVATA3/ESR (CLE)-related protein 4D (CLE-4D) from Globodera rostochiensis (Golden nematode worm).